A 1088-amino-acid chain; its full sequence is DEAD-box ATP-dependent RNA helicase 40 (1088 aa).

3 disordered regions span residues 1–28, 47–178, and 192–254; these read MATTEDTPASAGPRYAPEDPTLPQPWKG, TQYE…QYAH, and TQGL…QNTH. The residue at position 2 (Ala-2) is an N-acetylalanine. Residues 20 to 54 enclose the WW domain; the sequence is PTLPQPWKGLIDGSTGILYYWNPETNVTQYERPSA. Composition is skewed to low complexity over residues 87–137, 148–171, and 200–215; these read VGHV…SQSM, QTYQPTTQQQQQGMQNQHSQMPQQ, and QTPQGGPHGQQFPSQQ. The span at 222–231 shows a compositional bias: basic and acidic residues; it reads PKREGDEFHG. Over residues 236 to 254 the composition is skewed to polar residues; that stretch reads GFSQPHLPNSERSPSQNTH. The short motif at 435–463 is the Q motif element; sequence ITFESSGLPPEILRELLSAGFPSPTPIQA. Residues 466–640 enclose the Helicase ATP-binding domain; the sequence is WPIALQSRDI…SDLLVNPVQV (175 aa). 479–486 serves as a coordination point for ATP; sequence AKTGSGKT. The short motif at 588–591 is the DEAD box element; it reads DEAD. Residues 669-813 enclose the Helicase C-terminal domain; that stretch reads RLEQILRSQE…QVPPQVRDIA (145 aa). Composition is skewed to gly residues over residues 861 to 885, 893 to 902, 911 to 920, and 932 to 944; these read EGGFGGREGGFGGREGGFGGRGGRF, GRGGNRGRGF, NVGGRGGFGR, and FGRGSGRGFGRGV. The interval 861–1033 is disordered; sequence EGGFGGREGG…RRDRAPRVSG (173 aa). Basic and acidic residues predominate over residues 945–963; it reads GRFDNRRGRSRSRSPDLVR. A compositionally biased stretch (low complexity) spans 969-983; sequence SSYSRSRSRSGSYSR. The span at 984–1013 shows a compositional bias: basic residues; sequence SRSRSRSWSRSRSRSPRHSRDRGGHNRSRS.

The protein belongs to the DEAD box helicase family. DDX5/DBP2 subfamily.

It localises to the nucleus. It carries out the reaction ATP + H2O = ADP + phosphate + H(+). Functionally, ATP-dependent RNA helicase involved nonsense-mediated mRNA decay and ribosome biogenesis through rRNA processing. The sequence is that of DEAD-box ATP-dependent RNA helicase 40 (RH40) from Arabidopsis thaliana (Mouse-ear cress).